We begin with the raw amino-acid sequence, 221 residues long: GTP cyclohydrolase-2 (221 aa).

A GTP-binding site is contributed by 63-67 (RLHSE). Positions 68, 79, and 81 each coordinate Zn(2+). Residues Gln84, 107–109 (EGR), and Thr129 contribute to the GTP site. Asp141 functions as the Proton acceptor in the catalytic mechanism. The Nucleophile role is filled by Arg143. The GTP site is built by Ser164 and Lys169.

It belongs to the GTP cyclohydrolase II family. Zn(2+) serves as cofactor.

It catalyses the reaction GTP + 4 H2O = 2,5-diamino-6-hydroxy-4-(5-phosphoribosylamino)-pyrimidine + formate + 2 phosphate + 3 H(+). Its pathway is cofactor biosynthesis; riboflavin biosynthesis; 5-amino-6-(D-ribitylamino)uracil from GTP: step 1/4. Catalyzes the conversion of GTP to 2,5-diamino-6-ribosylamino-4(3H)-pyrimidinone 5'-phosphate (DARP), formate and pyrophosphate. This Streptomyces coelicolor (strain ATCC BAA-471 / A3(2) / M145) protein is GTP cyclohydrolase-2.